A 365-amino-acid polypeptide reads, in one-letter code: tRNA-specific 2-thiouridylase MnmA (365 aa).

Residues 9–16 (AMSGGVDS) and Met-35 each bind ATP. Residue Cys-105 is the Nucleophile of the active site. Cys-105 and Cys-203 are disulfide-bonded. Gly-129 contributes to the ATP binding site. The tract at residues 153 to 155 (KDQ) is interaction with tRNA. Cys-203 (cysteine persulfide intermediate) is an active-site residue. The segment at 308 to 309 (RY) is interaction with tRNA.

This sequence belongs to the MnmA/TRMU family.

The protein localises to the cytoplasm. The catalysed reaction is S-sulfanyl-L-cysteinyl-[protein] + uridine(34) in tRNA + AH2 + ATP = 2-thiouridine(34) in tRNA + L-cysteinyl-[protein] + A + AMP + diphosphate + H(+). Catalyzes the 2-thiolation of uridine at the wobble position (U34) of tRNA, leading to the formation of s(2)U34. The protein is tRNA-specific 2-thiouridylase MnmA of Pelotomaculum thermopropionicum (strain DSM 13744 / JCM 10971 / SI).